The chain runs to 255 residues: Wtf element wtf15 (255 aa).

The tract at residues Lys-19 to Ser-78 is disordered. Polar residues-rich tracts occupy residues Thr-41–Glu-60 and Glu-67–Ser-78. 3 consecutive transmembrane segments (helical) span residues Phe-85–Pro-105, Phe-112–Ile-132, and Phe-162–Leu-182.

This sequence belongs to the WTF family.

Its subcellular location is the spore membrane. Functionally, may act in meiotic drive. This is Wtf element wtf15 from Schizosaccharomyces kambucha (Fission yeast).